The primary structure comprises 462 residues: SET domain-containing protein SmydA-8, isoform A (462 aa).

The 233-residue stretch at 55–287 (PNWTISSSTV…KGGEITTTYT (233 aa)) folds into the SET domain.

This sequence belongs to the class V-like SAM-binding methyltransferase superfamily.

The chain is SET domain-containing protein SmydA-8, isoform A from Drosophila melanogaster (Fruit fly).